The chain runs to 823 residues: ATP-dependent DNA helicase At3g02060, chloroplastic (823 aa).

A chloroplast-targeting transit peptide spans 1 to 53 (MMSLLPNPDPITVPLVLKLCSFPPPRRLFSLRLRRFTRKSSSLLPLVAVSSLS). One can recognise a Helicase ATP-binding domain in the interval 285 to 447 (LTERETPMDR…LTGFRDASLI (163 aa)). 298 to 305 (GDVGFGKT) is a binding site for ATP. The short motif at 400-403 (DEEQ) is the DEEQ box element. One can recognise a Helicase C-terminal domain in the interval 465 to 622 (RKEKVIEAIK…GFQLAEKDMG (158 aa)).

Belongs to the helicase family.

The protein resides in the plastid. It is found in the chloroplast. It catalyses the reaction ATP + H2O = ADP + phosphate + H(+). This Arabidopsis thaliana (Mouse-ear cress) protein is ATP-dependent DNA helicase At3g02060, chloroplastic.